The sequence spans 765 residues: Phosphoribosylformylglycinamidine synthase subunit PurL (765 aa).

A compositionally biased stretch (polar residues) spans 1–13; that stretch reads MTVSPTSAPTQAI. The interval 1–32 is disordered; sequence MTVSPTSAPTQAIDTVERAATTPDEPQPFGEL. The active site involves H65. ATP is bound by residues Y68 and K112. E114 contributes to the Mg(2+) binding site. Residues 115 to 118 and R137 contribute to the substrate site; that span reads SHNH. H116 (proton acceptor) is an active-site residue. Residue D138 coordinates Mg(2+). Q263 serves as a coordination point for substrate. A Mg(2+)-binding site is contributed by D291. Position 335–337 (335–337) interacts with substrate; that stretch reads ESQ. ATP-binding residues include N523 and G560. N561 contacts Mg(2+). Residue S563 participates in substrate binding.

It belongs to the FGAMS family. Monomer. Part of the FGAM synthase complex composed of 1 PurL, 1 PurQ and 2 PurS subunits.

It is found in the cytoplasm. It carries out the reaction N(2)-formyl-N(1)-(5-phospho-beta-D-ribosyl)glycinamide + L-glutamine + ATP + H2O = 2-formamido-N(1)-(5-O-phospho-beta-D-ribosyl)acetamidine + L-glutamate + ADP + phosphate + H(+). It participates in purine metabolism; IMP biosynthesis via de novo pathway; 5-amino-1-(5-phospho-D-ribosyl)imidazole from N(2)-formyl-N(1)-(5-phospho-D-ribosyl)glycinamide: step 1/2. Part of the phosphoribosylformylglycinamidine synthase complex involved in the purines biosynthetic pathway. Catalyzes the ATP-dependent conversion of formylglycinamide ribonucleotide (FGAR) and glutamine to yield formylglycinamidine ribonucleotide (FGAM) and glutamate. The FGAM synthase complex is composed of three subunits. PurQ produces an ammonia molecule by converting glutamine to glutamate. PurL transfers the ammonia molecule to FGAR to form FGAM in an ATP-dependent manner. PurS interacts with PurQ and PurL and is thought to assist in the transfer of the ammonia molecule from PurQ to PurL. This chain is Phosphoribosylformylglycinamidine synthase subunit PurL, found in Mycobacterium avium (strain 104).